The sequence spans 256 residues: uncharacterized protein (256 aa).

The first 22 residues, 1–22, serve as a signal peptide directing secretion; the sequence is MGYLKRIGMCISLLIVIIFVTS. Cysteine 23 carries N-palmitoyl cysteine lipidation. Cysteine 23 carries S-diacylglycerol cysteine lipidation.

The protein belongs to the staphylococcal tandem lipoprotein family.

Its subcellular location is the cell membrane. This is an uncharacterized protein from Staphylococcus aureus (strain MSSA476).